The chain runs to 118 residues: Large ribosomal subunit protein bL19 (118 aa).

Belongs to the bacterial ribosomal protein bL19 family.

In terms of biological role, this protein is located at the 30S-50S ribosomal subunit interface and may play a role in the structure and function of the aminoacyl-tRNA binding site. In Campylobacter jejuni subsp. jejuni serotype O:6 (strain 81116 / NCTC 11828), this protein is Large ribosomal subunit protein bL19.